Consider the following 268-residue polypeptide: tRNA pseudouridine synthase A (268 aa).

Catalysis depends on Asp-52, which acts as the Nucleophile. A substrate-binding site is contributed by Tyr-113.

This sequence belongs to the tRNA pseudouridine synthase TruA family. In terms of assembly, homodimer.

The catalysed reaction is uridine(38/39/40) in tRNA = pseudouridine(38/39/40) in tRNA. In terms of biological role, formation of pseudouridine at positions 38, 39 and 40 in the anticodon stem and loop of transfer RNAs. In Rhizobium leguminosarum bv. trifolii (strain WSM2304), this protein is tRNA pseudouridine synthase A.